Here is a 306-residue protein sequence, read N- to C-terminus: Protein YIPF1 (306 aa).

Over Met-1–Asp-119 the chain is Cytoplasmic. The segment at Asn-14–Asp-62 is disordered. Polar residues predominate over residues Ala-15–Asn-29. The segment covering Glu-50–Asp-59 has biased composition (acidic residues). The helical transmembrane segment at Leu-120–Leu-140 threads the bilayer. Residues Ser-141–Ser-162 are Lumenal-facing. A helical membrane pass occupies residues Ile-163–Leu-183. Residues Met-184 to Glu-200 lie on the Cytoplasmic side of the membrane. Residues Ile-201–Ile-221 traverse the membrane as a helical segment. Topologically, residues Pro-222–Arg-227 are lumenal. The chain crosses the membrane as a helical span at residues Trp-228 to Pro-248. The Cytoplasmic portion of the chain corresponds to Ala-249–Arg-256. Residues Val-257–Leu-277 traverse the membrane as a helical segment. Topologically, residues Ala-278–Ser-306 are lumenal. Asn-297 is a glycosylation site (N-linked (GlcNAc...) asparagine).

The protein belongs to the YIP1 family. As to quaternary structure, interacts with YIPF6; this interaction may stabilize YIPF1. May also form a ternary complex with YIPF2 and YIPF6.

It localises to the golgi apparatus. Its subcellular location is the cis-Golgi network membrane. The protein localises to the trans-Golgi network membrane. The protein resides in the late endosome membrane. The chain is Protein YIPF1 (YIPF1) from Homo sapiens (Human).